A 368-amino-acid polypeptide reads, in one-letter code: MTVKLTIDCMGGDHGPSVTVPAAVKFVRSHPDAHLMLVGIESAIRAQLKKCKALDEPALSVVPAAEVVAMDDPVEVALRKKKDSSMRVALNHVKEGEAQACISAGNTGALMAVSRYVLKTLPGIERPAIAFALPNPTGYTMMLDLGANVDCEPQHLLQFAEMGHALVAALEGKERPTIGLLNIGEEVIKGNETIKRAGELLRASTLNFRGNVEGNDIYKGTVDVIVCDGFVGNVALKTSEGLAQMLADIIKEEFSRSLLSKLMALLALPVLLRFKKRVDHRQYNGAALLGLRSLVIKSHGSADAYAFEWAIKRGYDAVKNGVLERLSRAMAENAAPLGESGRDADGAGQASPSAGQPAEPSAALSSKT.

The disordered stretch occupies residues 334 to 368 (AAPLGESGRDADGAGQASPSAGQPAEPSAALSSKT).

Belongs to the PlsX family. Homodimer. Probably interacts with PlsY.

The protein localises to the cytoplasm. The catalysed reaction is a fatty acyl-[ACP] + phosphate = an acyl phosphate + holo-[ACP]. It participates in lipid metabolism; phospholipid metabolism. In terms of biological role, catalyzes the reversible formation of acyl-phosphate (acyl-PO(4)) from acyl-[acyl-carrier-protein] (acyl-ACP). This enzyme utilizes acyl-ACP as fatty acyl donor, but not acyl-CoA. This is Phosphate acyltransferase from Burkholderia thailandensis (strain ATCC 700388 / DSM 13276 / CCUG 48851 / CIP 106301 / E264).